Consider the following 497-residue polypeptide: Glucose-6-phosphate 1-dehydrogenase (497 aa).

NADP(+) contacts are provided by residues 17–24 (GASGDLAK), R51, and K151. D-glucose 6-phosphate-binding positions include K151, 181 to 185 (HYLGK), E219, and D238. Catalysis depends on H243, which acts as the Proton acceptor. K334 serves as a coordination point for NADP(+). Positions 337 and 342 each coordinate D-glucose 6-phosphate. The NADP(+) site is built by K343, R347, and R371. Q373 is a D-glucose 6-phosphate binding site. NADP(+)-binding positions include 379-381 (YLK), 399-401 (DLS), R465, and W487.

This sequence belongs to the glucose-6-phosphate dehydrogenase family.

The protein localises to the cytoplasm. Its subcellular location is the cytosol. It carries out the reaction D-glucose 6-phosphate + NADP(+) = 6-phospho-D-glucono-1,5-lactone + NADPH + H(+). It functions in the pathway carbohydrate degradation; pentose phosphate pathway; D-ribulose 5-phosphate from D-glucose 6-phosphate (oxidative stage): step 1/3. Its function is as follows. Cytosolic glucose-6-phosphate dehydrogenase that catalyzes the first and rate-limiting step of the oxidative branch within the pentose phosphate pathway/shunt, an alternative route to glycolysis for the dissimilation of carbohydrates and a major source of reducing power and metabolic intermediates for fatty acid and nucleic acid biosynthetic processes. This Dictyostelium discoideum (Social amoeba) protein is Glucose-6-phosphate 1-dehydrogenase (g6pd-1).